The sequence spans 31 residues: Photosystem II reaction center protein T (31 aa).

A helical membrane pass occupies residues S3–F23.

This sequence belongs to the PsbT family. As to quaternary structure, PSII is composed of 1 copy each of membrane proteins PsbA, PsbB, PsbC, PsbD, PsbE, PsbF, PsbH, PsbI, PsbJ, PsbK, PsbL, PsbM, PsbT, PsbX, PsbY, PsbZ, Psb30/Ycf12, peripheral proteins PsbO, CyanoQ (PsbQ), PsbU, PsbV and a large number of cofactors. It forms dimeric complexes.

The protein resides in the cellular thylakoid membrane. Found at the monomer-monomer interface of the photosystem II (PS II) dimer, plays a role in assembly and dimerization of PSII. PSII is a light-driven water plastoquinone oxidoreductase, using light energy to abstract electrons from H(2)O, generating a proton gradient subsequently used for ATP formation. The protein is Photosystem II reaction center protein T of Crocosphaera subtropica (strain ATCC 51142 / BH68) (Cyanothece sp. (strain ATCC 51142)).